The sequence spans 571 residues: Quinone-dependent D-lactate dehydrogenase (571 aa).

Residues 44–273 (GGGPVFAVVR…FAVRTRTFPR (230 aa)) form the FAD-binding PCMH-type domain. FAD contacts are provided by residues 78–82 (ASNTG), 86–87 (GS), glycine 145, serine 152, glycine 162, and valine 263.

This sequence belongs to the quinone-dependent D-lactate dehydrogenase family. It depends on FAD as a cofactor.

The protein resides in the cell membrane. It carries out the reaction (R)-lactate + a quinone = a quinol + pyruvate. Its function is as follows. Catalyzes the oxidation of D-lactate to pyruvate. Also has weak activity with L-lactate and DL-2-hydroxybutyrate. Electrons derived from D-lactate oxidation enter the electron transport chain. Essential for growth with D-lactate as sole carbon and energy source. The protein is Quinone-dependent D-lactate dehydrogenase of Corynebacterium glutamicum (strain ATCC 13032 / DSM 20300 / JCM 1318 / BCRC 11384 / CCUG 27702 / LMG 3730 / NBRC 12168 / NCIMB 10025 / NRRL B-2784 / 534).